Reading from the N-terminus, the 352-residue chain is Photosystem II D2 protein (352 aa).

Residues 40-60 (CAFMALGGWLTGTTFVTSWYT) form a helical membrane-spanning segment. Residue histidine 117 participates in chlorophyll a binding. The chain crosses the membrane as a helical span at residues 124-140 (GFMLRQFEIARLVGIRP). Pheophytin a-binding residues include glutamine 129 and asparagine 142. Residues 152–165 (VFVSVFLMYPLGQS) form a helical membrane-spanning segment. A chlorophyll a-binding site is contributed by histidine 197. A helical membrane pass occupies residues 207-227 (GALLCAIHGATVENTLFEDSD). A plastoquinone contacts are provided by histidine 214 and phenylalanine 261. Histidine 214 provides a ligand contact to Fe cation. Histidine 268 contributes to the Fe cation binding site. Residues 278 to 294 (GLWMSSVGIVGLALNLR) traverse the membrane as a helical segment.

It belongs to the reaction center PufL/M/PsbA/D family. As to quaternary structure, PSII is composed of 1 copy each of membrane proteins PsbA, PsbB, PsbC, PsbD, PsbE, PsbF, PsbH, PsbI, PsbJ, PsbK, PsbL, PsbM, PsbT, PsbX, PsbY, PsbZ, Psb30/Ycf12, peripheral proteins PsbO, CyanoQ (PsbQ), PsbU, PsbV and a large number of cofactors. It forms dimeric complexes. The D1/D2 heterodimer binds P680, chlorophylls that are the primary electron donor of PSII, and subsequent electron acceptors. It shares a non-heme iron and each subunit binds pheophytin, quinone, additional chlorophylls, carotenoids and lipids. There is also a Cl(-1) ion associated with D1 and D2, which is required for oxygen evolution. The PSII complex binds additional chlorophylls, carotenoids and specific lipids. serves as cofactor.

It localises to the cellular thylakoid membrane. It carries out the reaction 2 a plastoquinone + 4 hnu + 2 H2O = 2 a plastoquinol + O2. Its function is as follows. Photosystem II (PSII) is a light-driven water:plastoquinone oxidoreductase that uses light energy to abstract electrons from H(2)O, generating O(2) and a proton gradient subsequently used for ATP formation. It consists of a core antenna complex that captures photons, and an electron transfer chain that converts photonic excitation into a charge separation. The D1/D2 (PsbA/PsbD) reaction center heterodimer binds P680, the primary electron donor of PSII as well as several subsequent electron acceptors. D2 is needed for assembly of a stable PSII complex. This is Photosystem II D2 protein from Picosynechococcus sp. (strain ATCC 27264 / PCC 7002 / PR-6) (Agmenellum quadruplicatum).